We begin with the raw amino-acid sequence, 89 residues long: Extender of the chronological lifespan protein ecl3 (89 aa).

It belongs to the ecl1 family.

It localises to the nucleus. In terms of biological role, involved in chronological cell aging. The protein is Extender of the chronological lifespan protein ecl3 (ecl3) of Schizosaccharomyces pombe (strain 972 / ATCC 24843) (Fission yeast).